The sequence spans 121 residues: ATP synthase epsilon chain (121 aa).

Belongs to the ATPase epsilon chain family. In terms of assembly, F-type ATPases have 2 components, CF(1) - the catalytic core - and CF(0) - the membrane proton channel. CF(1) has five subunits: alpha(3), beta(3), gamma(1), delta(1), epsilon(1). CF(0) has three main subunits: a, b and c.

The protein localises to the cell membrane. Functionally, produces ATP from ADP in the presence of a proton gradient across the membrane. The chain is ATP synthase epsilon chain (atpC) from Mycobacterium bovis (strain ATCC BAA-935 / AF2122/97).